A 249-amino-acid polypeptide reads, in one-letter code: Oxidoreductase asL5 (249 aa).

Residues isoleucine 21, lysine 45, asparagine 90, tyrosine 155, lysine 159, isoleucine 188, and threonine 190 each contribute to the NADP(+) site. The active-site Proton acceptor is tyrosine 155. The active-site Lowers pKa of active site Tyr is lysine 159.

The protein belongs to the short-chain dehydrogenases/reductases (SDR) family.

Oxidoreductase; part of the gene cluster that mediates the biosynthesis of xenovulene A, an unusual meroterpenoid that has potent inhibitory effects on the human gamma-aminobutyrate A (GABAA) benzodiazepine receptor. The first step of xenovulene A biosynthesis is the biosynthesis of 3-methylorcinaldehyde performed by the non-reducing polyketide synthase aspks1. The salicylate hydroxylase asL1 then catalyzes the oxidative dearomatization of 3-methylorcinaldehyde to yield a dearomatized hydroxycyclohexadione. The 2-oxoglutarate-dependent dioxygenase asL3 further catalyzes the oxidative ring expansion to provide the first tropolone metabolite. The cytochrome P450 monooxygenase asR2 allows the synthesis of tropolone hemiacetal. In parallel, a previously unrecognised class of terpene cyclase, asR6, produces alpha-humulene from farnesylpyrophosphate (FPP). The putative Diels-Alderase asR5 probably catalyzes the formation of the tropolone-humulene skeleton by linking humulene and the polyketide moiety. Oxidative-ring contractions catalyzed by asL4 and asL6 then processively remove carbon atoms from the polyketide to yield xenovulene A. The protein is Oxidoreductase asL5 of Sarocladium schorii (Acremonium strictum (strain IMI 501407)).